We begin with the raw amino-acid sequence, 304 residues long: D-tagatose-1-phosphate kinase (304 aa).

Catalysis depends on aspartate 250, which acts as the Proton acceptor.

It belongs to the carbohydrate kinase PfkB family. It depends on Mg(2+) as a cofactor.

The catalysed reaction is alpha-D-tagatopyranose 1-phosphate + ATP = D-tagatofuranose 1,6-bisphosphate + ADP + H(+). It participates in carbohydrate degradation. Its activity is regulated as follows. Activity is inhibited by tagatose-6-phosphate and fructose-6-phosphate. In terms of biological role, kinase involved in a D-tagatose catabolic pathway. Catalyzes the phosphorylation of D-tagatose-1-phosphate (Tag-1P) to D-tagatose-1,6-bisphosphate. Can also use D-fructose-1-phosphate, with 40-fold lower catalytic efficiency, but not tagatose-6-phosphate or fructose-6-phosphate. The substrate, which occurs in a pyranose form in solution, may undergo a change to the furanose conformation after binding to the enzyme, in order to permit phosphorylation at C-6. This is D-tagatose-1-phosphate kinase from Bacillus licheniformis (strain ATCC 14580 / DSM 13 / JCM 2505 / CCUG 7422 / NBRC 12200 / NCIMB 9375 / NCTC 10341 / NRRL NRS-1264 / Gibson 46).